A 573-amino-acid polypeptide reads, in one-letter code: Methionine--tRNA ligase (573 aa).

The 'HIGH' region motif lies at 10 to 20 (PYVNSVPHLGN). The Zn(2+) site is built by Cys-143, Cys-146, Cys-156, and Cys-159. A 'KMSKS' region motif is present at residues 333–337 (KFSKS). Lys-336 lines the ATP pocket.

The protein belongs to the class-I aminoacyl-tRNA synthetase family. MetG type 1 subfamily. Zn(2+) is required as a cofactor.

It is found in the cytoplasm. It catalyses the reaction tRNA(Met) + L-methionine + ATP = L-methionyl-tRNA(Met) + AMP + diphosphate. In terms of biological role, is required not only for elongation of protein synthesis but also for the initiation of all mRNA translation through initiator tRNA(fMet) aminoacylation. The polypeptide is Methionine--tRNA ligase (Saccharolobus islandicus (strain M.14.25 / Kamchatka #1) (Sulfolobus islandicus)).